The sequence spans 302 residues: uncharacterized protein (302 aa).

It belongs to the HAD-like hydrolase superfamily.

The protein localises to the cytoplasm. It localises to the nucleus. This is an uncharacterized protein from Schizosaccharomyces pombe (strain 972 / ATCC 24843) (Fission yeast).